The chain runs to 331 residues: 6-phosphogluconolactonase (331 aa).

Lys-287 bears the N6-acetyllysine mark.

This sequence belongs to the cycloisomerase 2 family.

It carries out the reaction 6-phospho-D-glucono-1,5-lactone + H2O = 6-phospho-D-gluconate + H(+). It participates in carbohydrate degradation; pentose phosphate pathway; D-ribulose 5-phosphate from D-glucose 6-phosphate (oxidative stage): step 2/3. Catalyzes the hydrolysis of 6-phosphogluconolactone to 6-phosphogluconate. This is 6-phosphogluconolactonase from Escherichia coli O8 (strain IAI1).